The sequence spans 420 residues: UDP-N-acetylglucosamine 1-carboxyvinyltransferase (420 aa).

22–23 (KN) serves as a coordination point for phosphoenolpyruvate. Arg-92 serves as a coordination point for UDP-N-acetyl-alpha-D-glucosamine. The active-site Proton donor is the Cys-116. Cys-116 is subject to 2-(S-cysteinyl)pyruvic acid O-phosphothioketal. UDP-N-acetyl-alpha-D-glucosamine contacts are provided by residues 121–125 (RPVDQ), Asp-304, and Ile-326.

The protein belongs to the EPSP synthase family. MurA subfamily.

It localises to the cytoplasm. The catalysed reaction is phosphoenolpyruvate + UDP-N-acetyl-alpha-D-glucosamine = UDP-N-acetyl-3-O-(1-carboxyvinyl)-alpha-D-glucosamine + phosphate. Its pathway is cell wall biogenesis; peptidoglycan biosynthesis. Its function is as follows. Cell wall formation. Adds enolpyruvyl to UDP-N-acetylglucosamine. This chain is UDP-N-acetylglucosamine 1-carboxyvinyltransferase, found in Paraburkholderia phymatum (strain DSM 17167 / CIP 108236 / LMG 21445 / STM815) (Burkholderia phymatum).